A 714-amino-acid chain; its full sequence is Fatty acid oxidation complex subunit alpha (714 aa).

The tract at residues 1–190 is enoyl-CoA hydratase; it reads MEMASAFTLN…KLGLVDDVVP (190 aa). The 3-hydroxyacyl-CoA dehydrogenase stretch occupies residues 306 to 714; it reads APLNSVGILG…FWKTTATDLQ (409 aa).

In the N-terminal section; belongs to the enoyl-CoA hydratase/isomerase family. It in the central section; belongs to the 3-hydroxyacyl-CoA dehydrogenase family. As to quaternary structure, heterotetramer of two alpha chains (FadJ) and two beta chains (FadI).

Its subcellular location is the cytoplasm. It catalyses the reaction a (3S)-3-hydroxyacyl-CoA = a (2E)-enoyl-CoA + H2O. The catalysed reaction is a 4-saturated-(3S)-3-hydroxyacyl-CoA = a (3E)-enoyl-CoA + H2O. It carries out the reaction a (3S)-3-hydroxyacyl-CoA + NAD(+) = a 3-oxoacyl-CoA + NADH + H(+). The enzyme catalyses (3S)-3-hydroxybutanoyl-CoA = (3R)-3-hydroxybutanoyl-CoA. Its pathway is lipid metabolism; fatty acid beta-oxidation. Its function is as follows. Catalyzes the formation of a hydroxyacyl-CoA by addition of water on enoyl-CoA. Also exhibits 3-hydroxyacyl-CoA epimerase and 3-hydroxyacyl-CoA dehydrogenase activities. This is Fatty acid oxidation complex subunit alpha from Escherichia coli (strain UTI89 / UPEC).